A 755-amino-acid chain; its full sequence is Tryptophan 2-monooxygenase (755 aa).

Residues Ser247, Glu267, Lys275, and Arg295 each coordinate FMN. Arg295 is a binding site for substrate.

It belongs to the tryptophan 2-monooxygenase family. FMN serves as cofactor.

It catalyses the reaction L-tryptophan + O2 = indole-3-acetamide + CO2 + H2O. It participates in plant hormone metabolism; auxin biosynthesis. The sequence is that of Tryptophan 2-monooxygenase (iaaM) from Agrobacterium vitis (Rhizobium vitis).